The primary structure comprises 81 residues: UPF0248 protein SSO2687 (81 aa).

The protein belongs to the UPF0248 family.

The polypeptide is UPF0248 protein SSO2687 (Saccharolobus solfataricus (strain ATCC 35092 / DSM 1617 / JCM 11322 / P2) (Sulfolobus solfataricus)).